A 497-amino-acid polypeptide reads, in one-letter code: MSCVLGGVIPLGLLFLVCGSQGYLLPNVTLLEELLSKYQHNESHSRVRRAIPREDKEEILMLHNKLRGQVQPQASNMEYMTWDDELEKSAAAWASQCIWEHGPTSLLVSIGQNLGAHWGRYRSPGFHVQSWYDEVKDYTYPYPSECNPWCPERCSGPMCTHYTQIVWATTNKIGCAVNTCRKMTVWGEVWENAVYFVCNYSPKGNWIGEAPYKNGRPCSECPPSYGGSCRNNLCYREETYTPKPETDEMNEVETAPIPEENHVWLQPRVMRPTKPKKTSAVNYMTQVVRCDTKMKDRCKGSTCNRYQCPAGCLNHKAKIFGTLFYESSSSICRAAIHYGILDDKGGLVDITRNGKVPFFVKSERHGVQSLSKYKPSSSFMVSKVKVQDLDCYTTVAQLCPFEKPATHCPRIHCPAHCKDEPSYWAPVFGTNIYADTSSICKTAVHAGVISNESGGDVDVMPVDKKKTYVGSLRNGVQSESLGTPRDGKAFRIFAVRQ.

The N-terminal stretch at 1-22 (MSCVLGGVIPLGLLFLVCGSQG) is a signal peptide. Asn-27 is a glycosylation site (N-linked (GlcNAc...) asparagine). The 139-residue stretch at 62-200 (LHNKLRGQVQ…ENAVYFVCNY (139 aa)) folds into the SCP domain. LCCL domains follow at residues 284 to 379 (MTQV…SSSF) and 385 to 488 (KVQD…RDGK). Disulfide bonds link Cys-290–Cys-308, Cys-312–Cys-332, Cys-391–Cys-413, and Cys-417–Cys-440.

The protein belongs to the CRISP family. As to quaternary structure, binds to heparin, dermatan sulfate and chondroitin sulfate.

Its subcellular location is the secreted. Its function is as follows. Promotes matrix assembly. The protein is Cysteine-rich secretory protein LCCL domain-containing 2 (CRISPLD2) of Homo sapiens (Human).